Reading from the N-terminus, the 396-residue chain is Elongation factor Tu (396 aa).

One can recognise a tr-type G domain in the interval 10 to 206 (KPHVNIGTIG…AVDEYIPDPV (197 aa)). The segment at 19 to 26 (GHVDHGKT) is G1. Position 19 to 26 (19 to 26 (GHVDHGKT)) interacts with GTP. Threonine 26 lines the Mg(2+) pocket. The tract at residues 62-66 (GITIN) is G2. The G3 stretch occupies residues 83-86 (DAPG). Residues 83–87 (DAPGH) and 138–141 (NKSD) each bind GTP. Positions 138–141 (NKSD) are G4. The G5 stretch occupies residues 176 to 178 (SGL).

Belongs to the TRAFAC class translation factor GTPase superfamily. Classic translation factor GTPase family. EF-Tu/EF-1A subfamily. In terms of assembly, monomer.

It localises to the cytoplasm. It carries out the reaction GTP + H2O = GDP + phosphate + H(+). Its function is as follows. GTP hydrolase that promotes the GTP-dependent binding of aminoacyl-tRNA to the A-site of ribosomes during protein biosynthesis. In Micrococcus luteus (strain ATCC 4698 / DSM 20030 / JCM 1464 / CCM 169 / CCUG 5858 / IAM 1056 / NBRC 3333 / NCIMB 9278 / NCTC 2665 / VKM Ac-2230) (Micrococcus lysodeikticus), this protein is Elongation factor Tu.